The following is a 313-amino-acid chain: Ribose-phosphate pyrophosphokinase (313 aa).

ATP-binding positions include 37–39 (DGE) and 96–97 (RQ). Residues histidine 131 and aspartate 170 each coordinate Mg(2+). The active site involves lysine 193. D-ribose 5-phosphate contacts are provided by residues arginine 195, aspartate 219, and 223–227 (DTAGT).

The protein belongs to the ribose-phosphate pyrophosphokinase family. Class I subfamily. As to quaternary structure, homohexamer. Mg(2+) is required as a cofactor.

The protein localises to the cytoplasm. The catalysed reaction is D-ribose 5-phosphate + ATP = 5-phospho-alpha-D-ribose 1-diphosphate + AMP + H(+). The protein operates within metabolic intermediate biosynthesis; 5-phospho-alpha-D-ribose 1-diphosphate biosynthesis; 5-phospho-alpha-D-ribose 1-diphosphate from D-ribose 5-phosphate (route I): step 1/1. In terms of biological role, involved in the biosynthesis of the central metabolite phospho-alpha-D-ribosyl-1-pyrophosphate (PRPP) via the transfer of pyrophosphoryl group from ATP to 1-hydroxyl of ribose-5-phosphate (Rib-5-P). This is Ribose-phosphate pyrophosphokinase from Pseudomonas aeruginosa (strain ATCC 15692 / DSM 22644 / CIP 104116 / JCM 14847 / LMG 12228 / 1C / PRS 101 / PAO1).